The primary structure comprises 58 residues: Large ribosomal subunit protein bL32 (58 aa).

A compositionally biased stretch (basic residues) spans 1–20; sequence MALPKHKKSKSKRDKRRTHQ. Residues 1–26 are disordered; sequence MALPKHKKSKSKRDKRRTHQKLTAPN.

Belongs to the bacterial ribosomal protein bL32 family.

The polypeptide is Large ribosomal subunit protein bL32 (Desulfatibacillum aliphaticivorans).